The sequence spans 2640 residues: Collagen alpha-5(VI) chain (2640 aa).

An N-terminal signal peptide occupies residues 1–18 (MKLRLIAFVLILWTETLA). The nonhelical region stretch occupies residues 19–1426 (DQSPGPGPEY…ACCCTFCKCP (1408 aa)). VWFA domains are found at residues 30-209 (DVVF…IKDV), 268-445 (DLIF…LKKI), 474-644 (DIYF…KNEI), 660-829 (DIMF…ESKL), 846-1023 (DIVF…QETL), 1037-1214 (DVIF…VREI), and 1226-1413 (DVVV…LGNI). 3 N-linked (GlcNAc...) asparagine glycosylation sites follow: Asn201, Asn292, and Asn614. 5 Collagen-like domains span residues 1426 to 1478 (PGIP…GCPG), 1474 to 1524 (VGCP…DPGN), 1557 to 1614 (GQKG…GPEG), 1632 to 1689 (GSQG…GIPG), and 1706 to 1762 (GDPG…AGQP). The segment at 1427-1760 (GIPGPHGTRG…GRRGPKGTAG (334 aa)) is triple-helical region. Residues 1435–1761 (RGLQASKGSS…RRGPKGTAGQ (327 aa)) form a disordered region. Positions 1452–1464 (HRGEDGDPGRRGE) are enriched in basic and acidic residues. Residues 1537–1567 (DGEKGFPGDPGDPGKDSNIKGQKGEKGERGR) show a composition bias toward basic and acidic residues. Residues 1597–1609 (PSGQAGNPGPQGT) are compositionally biased toward polar residues. Residues 1610-1622 (QGPEGLQGSQGSS) are compositionally biased toward low complexity. The short motif at 1649 to 1651 (RGD) is the Cell attachment site element. The span at 1718–1727 (GIPGGPGPKG) shows a compositional bias: gly residues. The span at 1740–1750 (RSGLQGSQGPP) shows a compositional bias: low complexity. Positions 1761–2640 (QPIYSPCELI…NSKQDGEDAR (880 aa)) are nonhelical region. VWFA domains lie at 1790 to 1970 (ELVF…KLRR) and 1996 to 2186 (DVAF…VKFL). 2 consecutive short sequence motifs (cell attachment site) follow at residues 2216–2218 (RGD) and 2259–2261 (RGD). The VWFA 10 domain maps to 2321–2516 (DVAFLIDASQ…PDLDYVIKFI (196 aa)). N-linked (GlcNAc...) asparagine glycosylation is present at Asn2541. The interval 2617-2640 (DKEEPCSAETPAPVNSKQDGEDAR) is disordered.

The protein belongs to the type VI collagen family. In terms of assembly, trimers composed of three different chains: alpha-1(VI), alpha-2(VI), and alpha-3(VI) or alpha-4(VI) or alpha-5(VI) or alpha-6(VI). Post-translationally, prolines at the third position of the tripeptide repeating unit (G-X-Y) are hydroxylated in some or all of the chains. In newborn, it is expressed in lung, heart, kidney, muscle, brain, intestine, skin, femur, sternum and calvaria. In adult, it is widely expressed and is detected in lung, heart, kidney, spleen, muscle, ovary, uterus, brain, skin, liver and sternum.

It is found in the secreted. It localises to the extracellular space. Its subcellular location is the extracellular matrix. Functionally, collagen VI acts as a cell-binding protein. The sequence is that of Collagen alpha-5(VI) chain (Col6a5) from Mus musculus (Mouse).